The primary structure comprises 67 residues: Large ribosomal subunit protein bL31 (67 aa).

Belongs to the bacterial ribosomal protein bL31 family. Type A subfamily. As to quaternary structure, part of the 50S ribosomal subunit.

Binds the 23S rRNA. This Helicobacter acinonychis (strain Sheeba) protein is Large ribosomal subunit protein bL31.